The chain runs to 663 residues: DNA ligase 1 (663 aa).

NAD(+)-binding positions include Asp30–Asp34 and Ser78–Leu79. Lys105 serves as the catalytic N6-AMP-lysine intermediate. NAD(+)-binding residues include Arg126, Glu161, and Lys294. Zn(2+)-binding residues include Cys389, Cys392, Cys407, and Cys412. Positions Ala574–Val663 constitute a BRCT domain.

Belongs to the NAD-dependent DNA ligase family. LigA subfamily. Mg(2+) is required as a cofactor. Mn(2+) serves as cofactor.

The enzyme catalyses NAD(+) + (deoxyribonucleotide)n-3'-hydroxyl + 5'-phospho-(deoxyribonucleotide)m = (deoxyribonucleotide)n+m + AMP + beta-nicotinamide D-nucleotide.. DNA ligase that catalyzes the formation of phosphodiester linkages between 5'-phosphoryl and 3'-hydroxyl groups in double-stranded DNA using NAD as a coenzyme and as the energy source for the reaction. It is essential for DNA replication and repair of damaged DNA. This Nocardia farcinica (strain IFM 10152) protein is DNA ligase 1.